Consider the following 318-residue polypeptide: Cephalosporin-C deacetylase (318 aa).

Tyr91 contributes to the substrate binding site. Ser181 functions as the Nucleophile in the catalytic mechanism. Residues Asp269 and His298 each act as charge relay system in the active site.

This sequence belongs to the carbohydrate esterase 7 family. In terms of assembly, homohexamer.

The protein localises to the cytoplasm. It carries out the reaction Deacetylation of xylans and xylo-oligosaccharides.. The catalysed reaction is cephalosporin C + H2O = deacetylcephalosporin C + acetate + H(+). Esterase that removed acetyl groups from a number of O-acetylated small substrates, such as acetylated xylose, short xylooligosaccharides and cephalosporin C. Has no activity towards polymeric acetylated xylan. Cannot cleave amide linkages. The polypeptide is Cephalosporin-C deacetylase (cah) (Bacillus subtilis (strain 168)).